The sequence spans 920 residues: Sensor histidine kinase SsrA (920 aa).

The Cytoplasmic segment spans residues 1–19 (MNLLNLKNTLQTSLVIRLT). Residues 20 to 40 (FLFLLTTIIIWLLSVLTAAYI) traverse the membrane as a helical segment. Topologically, residues 41–291 (SMVQKRQHII…YGNLHNRILK (251 aa)) are periplasmic. The helical transmembrane segment at 292–312 (IILQQIPFTLTALVLMTSAFC) threads the bilayer. Residues 313 to 920 (WLLHRSLAKP…RMIFKNYTIT (608 aa)) are Cytoplasmic-facing. One can recognise an HAMP domain in the interval 317 to 369 (RSLAKPLWRFVDVINKTATAPLSTRLPAQRLDELDSIAGAFNQLLDTLQVQYD). Positions 354-395 (AGAFNQLLDTLQVQYDNLENKVAERTQALNEAKKRAERANKR) form a coiled coil. Residues 402–614 (VISHELRTPM…CVSLVLPLQE (213 aa)) form the Histidine kinase domain. ATP contacts are provided by histidine 405 and aspartate 549. At histidine 405 the chain carries Phosphohistidine; by autocatalysis. The Response regulatory domain occupies 690 to 808 (QILLVDDADI…TLARYISIAA (119 aa)). A 4-aspartylphosphate modification is found at aspartate 739.

Post-translationally, autophosphorylated.

The protein resides in the cell inner membrane. The catalysed reaction is ATP + protein L-histidine = ADP + protein N-phospho-L-histidine.. Functionally, member of the two-component regulatory system SsrA/SsrB (SpiR/SsrB) that is required for intracellular proliferation and systemic dissemination within the host. When inside acidic Salmonella-containing vesicles (SCV) within host cells the SsrA sensor kinase autophosphorylates and the phosphoryl group is transferred to the response regulator SsrB; phosphorylated SsrB activates the expression of genes encoding virulence proteins, including pathogenicity island 2 (SPI2) and other horizontally acquired genes, and antagonizes the action of transcriptional repressor hns (H-NS). The chain is Sensor histidine kinase SsrA from Salmonella typhimurium (strain LT2 / SGSC1412 / ATCC 700720).